Reading from the N-terminus, the 1097-residue chain is Importin-5 (1097 aa).

Position 2 is an N-acetylalanine (alanine 2). HEAT repeat units lie at residues 5–38 (AAEQQQFYLLLGNLLSPDNVVRKQAEETYENIPG), 43–77 (TFLLQAIRNTTAAEEARQMAAVLLRRLLSSAFDEV), 95–122 (MIIQMETQSSMRKKVCDIAAELARNLID), 130–157 (PEGLKFLFDSVSSQNVGLREAALHIFWN), 167–201 (QHYLDVIKRMLVQCMQDQEHPSIRTLSARATAAFI), 210–246 (LFKHFADLLPGFLQAVNDSCYQNDDSVLKSLVEIADT), 254–289 (HLEATLQLSLKLCGDTSLNNMQRQLALEVIVTLSET), 298–350 (TNIV…ACGL), 352–386 (GKLVLPMIKEHIMQMLQNPDWKYRHAGLMALSAIG), 390–430 (HQQM…ATDF), 432–472 (PGFQ…FTED), 475–523 (KSLL…ADTA), 525–568 (EKFV…GLAV), 570–615 (KEKF…CKIL), 617–692 (KEFQ…AKEL), 695–737 (GFVE…ARVR), 741–780 (YLTQMWHFMCDALIKAIGTEPDSDVLSEIMHSFAKCIEVM), 787–853 (NEHF…FSSY), 856–895 (KVLPWFEQLLPLIVNLICPHRPWPDRQWGLCIFDDVIEHC), 903–935 (AEYFLRPMLQYVCDNSPEVRQAAAYGLGVMAQY), 943–983 (FCTE…MKFK), 990–1021 (EEVLPHWLSWLPLHEDKEEAVQTFNYLCDLIE), 1032–1067 (NTNLPKIFSIIAEGEMHEAIKHEDPCAKRLANVVRQ), and 1070–1093 (TSGGLWTECIAQLSPEQQAAIQEL). Residues 28–99 (QAEETYENIP…KSELLMIIQM (72 aa)) enclose the Importin N-terminal domain. Positions 325–375 (DELEDDDFDSNAVAGESALDRMACGLGGKLVLPMIKEHIMQMLQNPDWKYR) are ran-GTP binding. The residue at position 827 (serine 827) is a Phosphoserine.

The protein belongs to the importin beta family. Importin beta-3 subfamily. As to quaternary structure, interacts with RPS7 and RPL5. Interacts with RPL23A (via BIB domain). Interacts with H2A, H2B, H3 and H4 histones. Interacts with CPEB3; this mediates CPEB3 nuclear import following neuronal stimulation which enhances the interaction in a RAN-regulated manner. Interacts with AIFM2; this interaction likely mediates the translocation of AIFM2 into the nucleus upon oxidative stress. Interacts with STX3 (isoform 3). Interacts with SRP19. (Microbial infection) Interacts with HIV-1 Rev.

The protein localises to the cytoplasm. The protein resides in the nucleus. It is found in the nucleolus. In terms of biological role, functions in nuclear protein import as nuclear transport receptor. Serves as receptor for nuclear localization signals (NLS) in cargo substrates. Is thought to mediate docking of the importin/substrate complex to the nuclear pore complex (NPC) through binding to nucleoporin and the complex is subsequently translocated through the pore by an energy requiring, Ran-dependent mechanism. At the nucleoplasmic side of the NPC, Ran binds to the importin, the importin/substrate complex dissociates and importin is re-exported from the nucleus to the cytoplasm where GTP hydrolysis releases Ran. The directionality of nuclear import is thought to be conferred by an asymmetric distribution of the GTP- and GDP-bound forms of Ran between the cytoplasm and nucleus. Mediates the nuclear import of ribosomal proteins RPL23A, RPS7 and RPL5. In vitro, mediates nuclear import of H2A, H2B, H3 and H4 histones. Binds to CPEB3 and mediates its nuclear import following neuronal stimulation. In case of HIV-1 infection, binds and mediates the nuclear import of HIV-1 Rev. This is Importin-5 (IPO5) from Homo sapiens (Human).